A 2364-amino-acid polypeptide reads, in one-letter code: Cytotoxin-L (2364 aa).

The four-helical bundle stretch occupies residues 1–91 (MNLVNKAQLQ…EVLELKNNSL (91 aa)). A GT44 domain is found at 96-468 (KNLHFIWIGG…APDVRSTINL (373 aa)). Positions 96–468 (KNLHFIWIGG…APDVRSTINL (373 aa)) are glucosyltransferase region. UDP-alpha-D-glucose-binding positions include 101–103 (IWI), Asn-139, 265–270 (LAAASD), and 286–288 (DVD). Residues Asp-288, Glu-515, and Ser-518 each contribute to the Mg(2+) site. 518-520 (SLW) contributes to the UDP-alpha-D-glucose binding site. The segment at 544–799 (GEDDNLDFAQ…KSKYLHELST (256 aa)) is autoprocessing region. 2 residues coordinate Zn(2+): Glu-545 and Asp-546. One can recognise a Peptidase C80 domain in the interval 567 to 774 (LSSMKTRNKE…EESIIKDISS (208 aa)). 1D-myo-inositol hexakisphosphate-binding residues include Tyr-577, Lys-600, and Lys-647. Residue His-653 coordinates Zn(2+). The For protease activity role is filled by His-653. Cys-698 acts as the Nucleophile; for protease activity in catalysis. A Zn(2+)-binding site is contributed by His-757. 3 residues coordinate 1D-myo-inositol hexakisphosphate: Lys-764, Lys-775, and Lys-792. The segment at 800 to 1500 (LLQEIRNNAN…ESIIRNIYMP (701 aa)) is translocation region. 5 interaction with host SEMA6A and SEMA6B regions span residues 1433–1438 (CMKLIE), 1466–1471 (DNETKY), 1484–1495 (FTAEFSNESIIR), 1504–1511 (NLFIYSSK), and 1596–1601 (YNNLDP). 20 Cell wall-binding repeats span residues 1813–1832 (EFGLVSLDNDYFYINSFGNM), 1833–1852 (VSGLIYINDSLYYFKPPKNN), 1854–1873 (ITGFTTIDGNKYYFDPTKSG), 1876–1895 (SIGEITIDGKDYYFNKQGIL), 1926–1945 (FIGKLNIDGKIYYFEDNYRA), 1946–1965 (AVEWKLLDDETYYFNPKTGE), 1967–1986 (LKGLHQIGDNKYYFDDNGIM), 1987–2006 (QTGFITINDKVFYFNNDGVM), 2007–2026 (QVGYIEVNGKYFYFGKNGER), 2057–2076 (YNGILNFNGKIYFFDISNTA), 2077–2097 (VVGWGTLDDGSTYYFDDNTAE), 2099–2118 (CIGLTVINDCKYYFDDNGIR), 2119–2138 (QLGFITINDNIFYFSESGKI), 2139–2158 (ELGYQNINGNYFYIDESGLV), 2209–2224 (ETGWIENETDKYYFDP), 2227–2249 (KKAYKGINVVDDIKYYFDENGIM), 2250–2269 (RTGLISFENNNYYFNEDGKM), 2270–2289 (QFGYLNIKDKMFYFGKDGKM), 2320–2339 (YTGWLDLDGKRYYFTDEYIA), and 2340–2359 (ATGSLTIDGYNYYFDPDTAE). Positions 1835 to 2364 (GLIYINDSLY…PDTAELVVSE (530 aa)) are receptor-binding (CROPS) region.

This sequence belongs to the clostridial glucosylating toxin (LCGT) family. In terms of assembly, homomultimer; forms an inactive homomultimer at pH 8, which dissociates at pH 4, leading to cytotoxicity. Interacts with host SEMA6A; interaction promotes toxin entry into host cell. Interacts with host SEMA6B; interaction promotes toxin entry into host cell. Zn(2+) serves as cofactor. The cofactor is Mn(2+). It depends on Mg(2+) as a cofactor. In terms of processing, undergoes autocatalytic cleavage to release the N-terminal part (Glucosyltransferase TcsL), which constitutes the active part of the toxin, in the host cytosol. 1D-myo-inositol hexakisphosphate-binding (InsP6) activates the peptidase C80 domain and promotes autoprocessing.

It localises to the secreted. Its subcellular location is the host endosome membrane. The protein resides in the host cytoplasm. It is found in the host cytosol. The protein localises to the host cell membrane. It carries out the reaction L-threonyl-[protein] + UDP-alpha-D-glucose = 3-O-(alpha-D-glucosyl)-L-threonyl-[protein] + UDP + H(+). Its activity is regulated as follows. Protease activity is activated upon binding to 1D-myo-inositol hexakisphosphate (InsP6), which induces conformational reorganization. Its function is as follows. Precursor of a cytotoxin that targets the vascular endothelium, inducing an anti-inflammatory effect and resulting in lethal toxic shock syndrome. TcsL constitutes the main toxin that mediates the pathology of P.sordellii infection, an anaerobic Gram-positive bacterium found in soil and in the gastrointestinal and vaginal tracts of animals and humans; although the majority of carriers are asymptomatic, pathogenic P.sordellii infections arise rapidly and are highly lethal. This form constitutes the precursor of the toxin: it enters into host cells and mediates autoprocessing to release the active toxin (Glucosyltransferase TcsL) into the host cytosol. Targets vascular endothelium by binding to the semaphorin proteins SEMA6A and SEMA6B, and enters host cells via clathrin-mediated endocytosis. Once entered into host cells, acidification in the endosome promotes the membrane insertion of the translocation region and formation of a pore, leading to translocation of the GT44 and peptidase C80 domains across the endosomal membrane. This activates the peptidase C80 domain and autocatalytic processing, releasing the N-terminal part (Glucosyltransferase TcsL), which constitutes the active part of the toxin, in the cytosol. Functionally, active form of the toxin, which is released into the host cytosol following autoprocessing and inactivates small GTPases. Acts by mediating monoglucosylation of small GTPases of the Ras (H-Ras/HRAS, K-Ras/KRAS and N-Ras/NRAS) family in host cells at the conserved threonine residue located in the switch I region ('Thr-37/35'), using UDP-alpha-D-glucose as the sugar donor. Also able to catalyze monoglucosylation of some members of the Rho family (Rac1 and Rap2A), but with less efficiency than with Ras proteins. Monoglucosylation of host small GTPases completely prevents the recognition of the downstream effector, blocking the GTPases in their inactive form and leading to apoptosis. Induces an anti-inflammatory effect, mainly by inactivating Ras proteins which results in blockage of the cell cycle and killing of immune cells. The absence or moderate local inflammatory response allows C.sordellii spreading in deep tissues, production of toxin which is released in the general circulation and causes a toxic shock syndrome. In Paraclostridium sordellii (strain ATCC 9714 / DSM 2141 / JCM 3814 / LMG 15708 / NCIMB 10717 / 211) (Clostridium sordellii), this protein is Cytotoxin-L.